A 480-amino-acid polypeptide reads, in one-letter code: Cysteine--tRNA ligase (480 aa).

Cysteine 27 contacts Zn(2+). A 'HIGH' region motif is present at residues 29–39 (PTVYNYAHIGN). The Zn(2+) site is built by cysteine 221, histidine 246, and glutamate 250. A 'KMSKS' region motif is present at residues 278–282 (KMSKS). Lysine 281 serves as a coordination point for ATP.

This sequence belongs to the class-I aminoacyl-tRNA synthetase family. As to quaternary structure, monomer. It depends on Zn(2+) as a cofactor.

The protein resides in the cytoplasm. It carries out the reaction tRNA(Cys) + L-cysteine + ATP = L-cysteinyl-tRNA(Cys) + AMP + diphosphate. The protein is Cysteine--tRNA ligase of Borrelia garinii subsp. bavariensis (strain ATCC BAA-2496 / DSM 23469 / PBi) (Borreliella bavariensis).